Reading from the N-terminus, the 798-residue chain is Cation channel sperm-associated auxiliary subunit delta (798 aa).

A signal peptide spans 1–20 (MLMLMLVAAVTMWLRPLVTA). The Extracellular segment spans residues 21-723 (QLCRSRTVRT…AFPVQLVSAG (703 aa)). 7 disulfides stabilise this stretch: cysteine 23–cysteine 369, cysteine 59–cysteine 145, cysteine 144–cysteine 152, cysteine 387–cysteine 496, cysteine 510–cysteine 701, cysteine 525–cysteine 572, and cysteine 624–cysteine 652. Asparagine 123 is a glycosylation site (N-linked (GlcNAc...) asparagine). Asparagine 230, asparagine 240, asparagine 472, asparagine 538, and asparagine 630 each carry an N-linked (GlcNAc...) asparagine glycan. A helical transmembrane segment spans residues 724–745 (VVILLIISSILGSVWLAYKTPK). The Cytoplasmic portion of the chain corresponds to 746–798 (LLRTARGRRIKKCATQLCRRCKTVCQFRASATARAGTEPPGRHRTPHGGRSDH).

The protein belongs to the CATSPERD family. As to quaternary structure, component of the CatSper complex or CatSpermasome composed of the core pore-forming members CATSPER1, CATSPER2, CATSPER3 and CATSPER4 as well as auxiliary members CATSPERB, CATSPERG, CATSPERD, CATSPERE, CATSPERZ, C2CD6/CATSPERT, TMEM249, TMEM262 and EFCAB9. HSPA1 may be an additional auxiliary complex member. The core complex members CATSPER1, CATSPER2, CATSPER3 and CATSPER4 form a heterotetrameric channel. The auxiliary CATSPERB, CATSPERG, CATSPERD and CATSPERE subunits form a pavilion-like structure over the pore which stabilizes the complex through interactions with CATSPER4, CATSPER3, CATSPER1 and CATSPER2 respectively. TMEM262/CATSPERH interacts with CATSPERB, further stabilizing the complex. C2CD6/CATSPERT interacts at least with CATSPERD and is required for targeting the CatSper complex in the flagellar membrane.

It is found in the cell projection. It localises to the cilium. The protein localises to the flagellum membrane. Auxiliary component of the CatSper complex, a complex involved in sperm cell hyperactivation. Sperm cell hyperactivation is needed for sperm motility which is essential late in the preparation of sperm for fertilization. Required for CATSPER1 stability before intraflagellar transport and/or incorporation of the CatSper complex channel into the flagellar membrane. This is Cation channel sperm-associated auxiliary subunit delta from Homo sapiens (Human).